A 679-amino-acid chain; its full sequence is UvrABC system protein B (679 aa).

The Helicase ATP-binding domain occupies 25 to 190 (EGVNQGQRYQ…SRNDFDITRG (166 aa)). 38-45 (GATGTGKT) contacts ATP. Residues 91–114 (YYDYYQPEAYVPVSDTYIAKTASI) carry the Beta-hairpin motif. The 163-residue stretch at 429–591 (QVDDLLAEIR…IVPRPAGKRA (163 aa)) folds into the Helicase C-terminal domain. The region spanning 639 to 674 (PELIDQLETKMKEAAKNLNFEEAASLRDRIKKFRQK) is the UVR domain.

This sequence belongs to the UvrB family. Forms a heterotetramer with UvrA during the search for lesions. Interacts with UvrC in an incision complex.

The protein resides in the cytoplasm. The UvrABC repair system catalyzes the recognition and processing of DNA lesions. A damage recognition complex composed of 2 UvrA and 2 UvrB subunits scans DNA for abnormalities. Upon binding of the UvrA(2)B(2) complex to a putative damaged site, the DNA wraps around one UvrB monomer. DNA wrap is dependent on ATP binding by UvrB and probably causes local melting of the DNA helix, facilitating insertion of UvrB beta-hairpin between the DNA strands. Then UvrB probes one DNA strand for the presence of a lesion. If a lesion is found the UvrA subunits dissociate and the UvrB-DNA preincision complex is formed. This complex is subsequently bound by UvrC and the second UvrB is released. If no lesion is found, the DNA wraps around the other UvrB subunit that will check the other stand for damage. The polypeptide is UvrABC system protein B (Prochlorococcus marinus (strain MIT 9303)).